We begin with the raw amino-acid sequence, 1037 residues long: Sodium/potassium exporting P-type ATPase cta3 (1037 aa).

Residues 1-61 lie on the Cytoplasmic side of the membrane; it reads MVTINISNPV…GVSAWKVLLR (61 aa). The helical transmembrane segment at 62 to 82 threads the bilayer; sequence QVLNAMCVVLILAAALSFGTT. A topological domain (extracellular) is located at residue aspartate 83. The helical transmembrane segment at 84-104 threads the bilayer; the sequence is WIEGGVISAIIVLNITVGFIQ. Residues 105-281 lie on the Cytoplasmic side of the membrane; that stretch reads EYKAEKTMDS…LNVGTPLQRK (177 aa). A helical membrane pass occupies residues 282 to 302; that stretch reads LTVLAYILFCIAIILAIIVMA. Topologically, residues 303-313 are extracellular; it reads AHSFHVTNEVS. The helical transmembrane segment at 314-334 threads the bilayer; the sequence is IYAISLGISIIPESLIAVLSI. Residues 335–760 lie on the Cytoplasmic side of the membrane; the sequence is TMAMGQKNMS…GRRMFDNIMR (426 aa). Aspartate 368 (4-aspartylphosphate intermediate) is an active-site residue. The Mg(2+) site is built by aspartate 368 and threonine 370. Residues threonine 370, glutamate 468, lysine 520, arginine 559, threonine 620, glycine 621, aspartate 622, arginine 678, and lysine 684 each coordinate ATP. Aspartate 703 contacts Mg(2+). An ATP-binding site is contributed by asparagine 706. The chain crosses the membrane as a helical span at residues 761 to 781; the sequence is FVLHLLVSNVGEVILLVVGLA. The Extracellular portion of the chain corresponds to 782–787; it reads FRDEVH. The chain crosses the membrane as a helical span at residues 788–808; it reads LSVFPMSPVEILWCNMITSSF. The Cytoplasmic segment spans residues 809-844; the sequence is PSMGLGMELAQPDVMERLPHDNKVGIFQKSLIVDMM. Residues 845 to 865 traverse the membrane as a helical segment; it reads VYGFFLGVVSLMTWVVIMYGF. At 866-889 the chain is on the extracellular side; it reads GTGNLSYDCNAHYHAGCNDVFKAR. An N-linked (GlcNAc...) asparagine glycan is attached at asparagine 869. Residues 890–910 traverse the membrane as a helical segment; it reads SAVFAVVTFCILIMAVEVKNF. Over 911–939 the chain is Cytoplasmic; that stretch reads DNSLFNLHGIPWGEWNFRYFLHTLVENKF. A helical transmembrane segment spans residues 940-960; the sequence is LAWAIALAAVSVFPTIYIPVI. The Extracellular portion of the chain corresponds to 961 to 969; that stretch reads NRDVFKHTY. The chain crosses the membrane as a helical span at residues 970–990; the sequence is IGWEWGVVAVAVMFYFFYVEI. Residues 991-1037 lie on the Cytoplasmic side of the membrane; it reads WKSIRRSLTNPQKKGKFRRTLSNTITTESKLSEKDLEHRLFLQSRRA. Serine 1012 is modified (phosphoserine).

This sequence belongs to the cation transport ATPase (P-type) (TC 3.A.3) family. Type IID subfamily. It depends on Mg(2+) as a cofactor. In terms of processing, the active site is phosphorylated in presence of sodium or potassium and in conditions of higher pH. Not phosphorylated in presence of calcium ions.

It localises to the cell membrane. It carries out the reaction Na(+)(in) + ATP + H2O = Na(+)(out) + ADP + phosphate + H(+). The enzyme catalyses K(+)(in) + ATP + H2O = K(+)(out) + ADP + phosphate + H(+). Its function is as follows. Catalyzes the hydrolysis of ATP coupled with the export of sodium and potassium from the cell. May export sodium less efficiently. May transport other cations such as lithium. Sodium/potassium efflux ATPases are involved in salt tolerance and maintaining the membrane potential across the plasma membrane in high salinity (Na+) or alkaline (K+) environments. In Schizosaccharomyces pombe (strain 972 / ATCC 24843) (Fission yeast), this protein is Sodium/potassium exporting P-type ATPase cta3.